The following is a 386-amino-acid chain: L-prolyl-[peptidyl-carrier protein] dehydrogenase (386 aa).

Residues 125-134 and 158-160 contribute to the FAD site; these read NAATEPDAGS and FIT. Catalysis depends on glutamate 244, which acts as the Proton acceptor. Residues arginine 270, glutamine 281, 338 to 342, and 367 to 369 each bind FAD; these read QTFGG and TND.

Belongs to the acyl-CoA dehydrogenase family. The cofactor is FAD.

It catalyses the reaction L-prolyl-[peptidyl-carrier protein] + 2 oxidized [electron-transfer flavoprotein] + H(+) = (1H-pyrrole-2-carbonyl)-[peptidyl-carrier protein] + 2 reduced [electron-transfer flavoprotein]. It functions in the pathway antibiotic biosynthesis; prodigiosin biosynthesis. Its function is as follows. Involved in the biosynthesis of 4-methoxy-2,2'-bipyrrole-5-carbaldehyde (MBC), one of the terminal products involved in the biosynthesis of the red antibiotic prodigiosin (Pig). Catalyzes the desaturation of the L-prolyl-[PigG] to yield 1H-pyrrole-2-carbonyl-[PigG]. This is L-prolyl-[peptidyl-carrier protein] dehydrogenase from Serratia sp. (strain ATCC 39006) (Prodigiosinella confusarubida).